The sequence spans 91 residues: MKFIVGLLLVLLLALQYQLWISKDGLGELRQLSRSIKQQRHENATLIERNQVLKAEVQDLKSGLDALEERARSGLGMIKQGETFFQVVEEP.

At 1–3 the chain is on the cytoplasmic side; it reads MKF. A helical transmembrane segment spans residues 4-21; it reads IVGLLLVLLLALQYQLWI. Residues 22–91 lie on the Periplasmic side of the membrane; that stretch reads SKDGLGELRQ…ETFFQVVEEP (70 aa). Residues 26–74 are a coiled coil; that stretch reads LGELRQLSRSIKQQRHENATLIERNQVLKAEVQDLKSGLDALEERARSG.

This sequence belongs to the FtsB family. As to quaternary structure, part of a complex composed of FtsB, FtsL and FtsQ.

Its subcellular location is the cell inner membrane. Essential cell division protein. May link together the upstream cell division proteins, which are predominantly cytoplasmic, with the downstream cell division proteins, which are predominantly periplasmic. The polypeptide is Cell division protein FtsB (Nitrosococcus oceani (strain ATCC 19707 / BCRC 17464 / JCM 30415 / NCIMB 11848 / C-107)).